A 292-amino-acid chain; its full sequence is MEDSKKKGLIEGAILDIINGSIAGACGKVIEFPFDTVKVRLQTQASNVFPTTWSCIKFTYQNEGIARGFFQGIASPLVGACLENATLFVSYNQCSKFLEKHTNVSPLGQILISGGVAGSCASLVLTPVELVKCKLQVANLQVASAKTKHTKVLPTIKAIITERGLAGLWQGQSGTFIRESFGGVAWFATYEIVKKSLKDRHSLDDPKRDESKIWELLISGGSAGLAFNASIFPADTVKSVMQTEHISLTNAVKKIFGKFGLKGFYRGLGITLFRAVPANAAVFYIFETLSAL.

Solcar repeat units follow at residues 11-97, 105-196, and 211-292; these read EGAI…CSKF, SPLG…VKKS, and SKIW…LSAL. The next 6 membrane-spanning stretches (helical) occupy residues 14–34, 69–89, 104–124, 171–187, 213–233, and 267–287; these read ILDIINGSIAGACGKVIEFPF, FFQGIASPLVGACLENATLFV, VSPLGQILISGGVAGSCASLV, GQSGTFIRESFGGVAWF, IWELLISGGSAGLAFNASIFP, and GLGITLFRAVPANAAVFYIFE.

The protein belongs to the mitochondrial carrier (TC 2.A.29) family.

The protein resides in the mitochondrion inner membrane. Functionally, required for arginine biosynthesis. Transports ornithine synthesized from glutamate in the mitochondrial matrix to the cytosol, where it is converted to arginine. The polypeptide is Mitochondrial ornithine transporter 1 (ORT1) (Saccharomyces cerevisiae (strain ATCC 204508 / S288c) (Baker's yeast)).